The chain runs to 449 residues: C4-dicarboxylate transport protein (449 aa).

Residues 1–20 (MSALTESFGPVPSAKSKPPA) form a disordered region. Over residues 10–20 (PVPSAKSKPPA) the composition is skewed to low complexity. Transmembrane regions (helical) follow at residues 28–48 (LLYL…WLSP), 66–86 (LIKM…IAHI), 101–121 (LYFE…GNVV), 167–187 (GDIL…MTLG), 205–225 (FGVI…AMAF), 241–261 (LIAV…GLIA), 326–346 (IYMT…LTWT), and 370–390 (FITL…GMAI).

This sequence belongs to the dicarboxylate/amino acid:cation symporter (DAACS) (TC 2.A.23) family.

The protein resides in the cell inner membrane. Responsible for the transport of dicarboxylates such as succinate, fumarate, and malate from the periplasm across the membrane. In Rhodopseudomonas palustris (strain BisB18), this protein is C4-dicarboxylate transport protein.